The sequence spans 71 residues: Small integral membrane protein 31 (71 aa).

A helical transmembrane segment spans residues 8–28 (LEVAFILLAFFIFSLFTLASI). The span at 48–57 (RKRKEFKGKK) shows a compositional bias: basic residues. The segment at 48 to 71 (RKRKEFKGKKNCSDEEHKIETMQP) is disordered. A glycan (N-linked (GlcNAc...) asparagine) is linked at Asn-58. A compositionally biased stretch (basic and acidic residues) spans 58-71 (NCSDEEHKIETMQP).

It localises to the membrane. This is Small integral membrane protein 31 from Mus musculus (Mouse).